Consider the following 87-residue polypeptide: Small ribosomal subunit protein bS20 (87 aa).

The tract at residues 1 to 22 (MANTSQARKRARQAGVRRVRNA) is disordered. Positions 7–20 (ARKRARQAGVRRVR) are enriched in basic residues.

It belongs to the bacterial ribosomal protein bS20 family.

Binds directly to 16S ribosomal RNA. This Nitrosococcus oceani (strain ATCC 19707 / BCRC 17464 / JCM 30415 / NCIMB 11848 / C-107) protein is Small ribosomal subunit protein bS20.